We begin with the raw amino-acid sequence, 524 residues long: GMP synthase [glutamine-hydrolyzing] (524 aa).

One can recognise a Glutamine amidotransferase type-1 domain in the interval 8–206 (KILILDFGSQ…VRKLCQCEAR (199 aa)). The Nucleophile role is filled by Cys-85. Residues His-180 and Glu-182 contribute to the active site. The 193-residue stretch at 207 to 399 (WTTGNIVEDA…LGLPYEMVYR (193 aa)) folds into the GMPS ATP-PPase domain. ATP is bound at residue 234–240 (SGGVDSS).

In terms of assembly, homodimer.

It carries out the reaction XMP + L-glutamine + ATP + H2O = GMP + L-glutamate + AMP + diphosphate + 2 H(+). The protein operates within purine metabolism; GMP biosynthesis; GMP from XMP (L-Gln route): step 1/1. Catalyzes the synthesis of GMP from XMP. This Methylococcus capsulatus (strain ATCC 33009 / NCIMB 11132 / Bath) protein is GMP synthase [glutamine-hydrolyzing].